We begin with the raw amino-acid sequence, 128 residues long: Gastrotropin (128 aa).

N-acetylalanine is present on A2.

The protein belongs to the calycin superfamily. Fatty-acid binding protein (FABP) family. In terms of tissue distribution, predominantly expressed in ileum; also expressed in ovary.

The protein localises to the cytoplasm. It is found in the membrane. In terms of biological role, binds to bile acids and is involved in enterohepatic bile acid metabolism. Required for efficient apical to basolateral transport of conjugated bile acids in ileal enterocytes. Stimulates gastric acid and pepsinogen secretion. This chain is Gastrotropin (Fabp6), found in Rattus norvegicus (Rat).